The following is a 274-amino-acid chain: MVPDLIRNVVGIVGNVISFGLFLSPVPTFWRIIKNKDVRDFKADQYLATLLNCMLWVFYGLPIVHPNSILVVTINGIGLVIEAVYLTIFFLFSDKKNKKKMGVVLATEALFMAAVALGVLLDAHTHQRRSLIVGILCVIFGTIMYSSPLTIMSQVVKTKSVEYMPLLLSVVSFLNGLCWTSYALIRFDIFITIPNGLGVLFALMQLILYAIYYRTTPKKPSTTGPHPRSRIRTSSYQPSPPSPRAPASSPLSARTTTSMAAMSPSISRLSHKLA.

Residues 1–8 (MVPDLIRN) lie on the Extracellular side of the membrane. Residues 9–29 (VVGIVGNVISFGLFLSPVPTF) traverse the membrane as a helical segment. The region spanning 9–96 (VVGIVGNVIS…TIFFLFSDKK (88 aa)) is the MtN3/slv 1 domain. Residues 30-45 (WRIIKNKDVRDFKADQ) lie on the Cytoplasmic side of the membrane. Residues 46-66 (YLATLLNCMLWVFYGLPIVHP) traverse the membrane as a helical segment. Topologically, residues 67–68 (NS) are extracellular. A helical transmembrane segment spans residues 69–89 (ILVVTINGIGLVIEAVYLTIF). Residues 90-100 (FLFSDKKNKKK) are Cytoplasmic-facing. The chain crosses the membrane as a helical span at residues 101-121 (MGVVLATEALFMAAVALGVLL). Over 122-130 (DAHTHQRRS) the chain is Extracellular. The chain crosses the membrane as a helical span at residues 131–151 (LIVGILCVIFGTIMYSSPLTI). The region spanning 132 to 214 (IVGILCVIFG…QLILYAIYYR (83 aa)) is the MtN3/slv 2 domain. Residues 152 to 164 (MSQVVKTKSVEYM) lie on the Cytoplasmic side of the membrane. A helical membrane pass occupies residues 165–185 (PLLLSVVSFLNGLCWTSYALI). Topologically, residues 186–188 (RFD) are extracellular. Residues 189–209 (IFITIPNGLGVLFALMQLILY) form a helical membrane-spanning segment. Residues 210–274 (AIYYRTTPKK…SISRLSHKLA (65 aa)) are Cytoplasmic-facing. The disordered stretch occupies residues 218 to 274 (KKPSTTGPHPRSRIRTSSYQPSPPSPRAPASSPLSARTTTSMAAMSPSISRLSHKLA). Low complexity predominate over residues 245–258 (APASSPLSARTTTS).

The protein belongs to the SWEET sugar transporter family. Forms homooligomers and/or heterooligomers.

The protein localises to the cell membrane. Functionally, mediates both low-affinity uptake and efflux of sugar across the plasma membrane. In Oryza sativa subsp. japonica (Rice), this protein is Putative bidirectional sugar transporter SWEET7d (SWEET7D).